Consider the following 573-residue polypeptide: Urease subunit alpha (573 aa).

The Urease domain maps to 136 to 573 (GAIDCHVHLI…LPMAQRYFLF (438 aa)). Ni(2+)-binding residues include His141, His143, and Lys224. Lys224 carries the post-translational modification N6-carboxylysine. His226 is a substrate binding site. Positions 253 and 279 each coordinate Ni(2+). His327 functions as the Proton donor in the catalytic mechanism. Residue Asp367 participates in Ni(2+) binding.

It belongs to the metallo-dependent hydrolases superfamily. Urease alpha subunit family. Heterotrimer of UreA (gamma), UreB (beta) and UreC (alpha) subunits. Three heterotrimers associate to form the active enzyme. Requires Ni cation as cofactor. In terms of processing, carboxylation allows a single lysine to coordinate two nickel ions.

It localises to the cytoplasm. It carries out the reaction urea + 2 H2O + H(+) = hydrogencarbonate + 2 NH4(+). It functions in the pathway nitrogen metabolism; urea degradation; CO(2) and NH(3) from urea (urease route): step 1/1. This chain is Urease subunit alpha, found in Mycobacterium sp. (strain JLS).